We begin with the raw amino-acid sequence, 349 residues long: Fructose-1,6-bisphosphatase class 1 (349 aa).

The Mg(2+) site is built by glutamate 91, aspartate 110, leucine 112, and aspartate 113. Substrate contacts are provided by residues 113-116 (DGSS) and asparagine 205. Glutamate 277 is a binding site for Mg(2+).

This sequence belongs to the FBPase class 1 family. Homotetramer. Mg(2+) serves as cofactor.

It is found in the cytoplasm. The enzyme catalyses beta-D-fructose 1,6-bisphosphate + H2O = beta-D-fructose 6-phosphate + phosphate. It participates in carbohydrate biosynthesis; gluconeogenesis. This Rhizobium meliloti (strain 1021) (Ensifer meliloti) protein is Fructose-1,6-bisphosphatase class 1.